Consider the following 454-residue polypeptide: Probable tRNA methyltransferase 9B (454 aa).

Ser-214 is modified (phosphoserine).

This sequence belongs to the methyltransferase superfamily. Down-regulated in breast, bladder, colorectal, cervix and testicular carcinomas.

Functionally, may modify wobble uridines in specific arginine and glutamic acid tRNAs. Acts as a tumor suppressor by promoting the expression of LIN9. The chain is Probable tRNA methyltransferase 9B from Homo sapiens (Human).